An 811-amino-acid polypeptide reads, in one-letter code: Probable potassium transporter 16 (811 aa).

Over 1-66 (MAQQQAGARG…GQESWMRTLR (66 aa)) the chain is Cytoplasmic. Residues 67–87 (LGFQCVGILHADLGTSPLYVY) traverse the membrane as a helical segment. Residues 88-100 (QNTFKYGIKHEDD) are Extracellular-facing. Residues 101 to 121 (IIGVLSLIIYSFVLFTMVKIV) form a helical membrane-spanning segment. Topologically, residues 122-190 (FIALHANDDG…KSQLEKKPAK (69 aa)) are cytoplasmic. Residues 191–211 (IAVFFLTIFATALAISDCVLN) form a helical membrane-spanning segment. Residues 212–228 (PSVSVLSAVNGLKLRAP) are Extracellular-facing. A helical transmembrane segment spans residues 229-249 (HLTTDEVVWITVGILVVFFAV). The Cytoplasmic segment spans residues 250-256 (QRFGTDK). A helical membrane pass occupies residues 257–277 (IGYTFAPVVVVWLLLISGIGI). At 278 to 310 (YDLVKYDVGVLRAFNPKYIIDYFRRNKKDGWVQ) the chain is on the extracellular side. The helical transmembrane segment at 311–331 (LGEVLLTFTGTEALFADLGYF) threads the bilayer. Topologically, residues 332-337 (SIKSIQ) are cytoplasmic. The helical transmembrane segment at 338–358 (LSSTFVLLPSVLCTYIGQAAY) threads the bilayer. Residues 359–379 (LRKHMDQQHIQNAFFNSIPRP) are Extracellular-facing. Residues 380-400 (LFWPMFVLAIMTSVIGCQAMV) form a helical membrane-spanning segment. Topologically, residues 401–438 (SCAFATMSHLQTLNCFPRIKILHTSRRYSGQLYSPEVN) are cytoplasmic. The chain crosses the membrane as a helical span at residues 439-459 (FFLCLLSCVITLSFRTTGFIV). The Extracellular segment spans residues 460-463 (KAHE). A helical membrane pass occupies residues 464-484 (ICVVLVMVITTILMTIVMLLV). Topologically, residues 485 to 488 (WKVN) are cytoplasmic. Residues 489 to 509 (IWWIVLFFVVFMSTETVYLSA) traverse the membrane as a helical segment. Over 510–519 (VLYKFTKGPY) the chain is Extracellular. Residues 520–540 (MPLAMSAVLMVIMFVWHYVHV) form a helical membrane-spanning segment. At 541-811 (KRYKFELEHT…LLKVGITYEI (271 aa)) the chain is on the cytoplasmic side.

This sequence belongs to the HAK/KUP transporter (TC 2.A.72.3) family.

It is found in the membrane. Functionally, high-affinity potassium transporter. This chain is Probable potassium transporter 16 (HAK16), found in Oryza sativa subsp. japonica (Rice).